The chain runs to 243 residues: Orotidine 5'-phosphate decarboxylase (243 aa).

Substrate is bound by residues Asp19, Lys41, 69-78, Thr124, Arg185, Gln194, Gly214, and Arg215; that span reads DLKFFDIPAT. The Proton donor role is filled by Lys71.

The protein belongs to the OMP decarboxylase family. Type 1 subfamily. In terms of assembly, homodimer.

It catalyses the reaction orotidine 5'-phosphate + H(+) = UMP + CO2. Its pathway is pyrimidine metabolism; UMP biosynthesis via de novo pathway; UMP from orotate: step 2/2. Catalyzes the decarboxylation of orotidine 5'-monophosphate (OMP) to uridine 5'-monophosphate (UMP). This chain is Orotidine 5'-phosphate decarboxylase, found in Xanthomonas campestris pv. campestris (strain B100).